Here is a 143-residue protein sequence, read N- to C-terminus: Transcriptional regulator MraZ (143 aa).

SpoVT-AbrB domains follow at residues glutamate 5–glycine 47 and alanine 76–arginine 119.

This sequence belongs to the MraZ family. In terms of assembly, forms oligomers.

It localises to the cytoplasm. It is found in the nucleoid. This Moorella thermoacetica (strain ATCC 39073 / JCM 9320) protein is Transcriptional regulator MraZ.